We begin with the raw amino-acid sequence, 471 residues long: Tryptophanase (471 aa).

N6-acetyllysine is present on residues Lys5, Lys115, and Lys156. N6-(pyridoxal phosphate)lysine is present on Lys270. Lys450 carries the post-translational modification N6-acetyllysine.

This sequence belongs to the beta-eliminating lyase family. As to quaternary structure, homotetramer. Requires pyridoxal 5'-phosphate as cofactor.

It carries out the reaction L-tryptophan + H2O = indole + pyruvate + NH4(+). It participates in amino-acid degradation; L-tryptophan degradation via pyruvate pathway; indole and pyruvate from L-tryptophan: step 1/1. This Escherichia coli (strain SMS-3-5 / SECEC) protein is Tryptophanase.